The sequence spans 162 residues: uncharacterized protein (162 aa).

The first 18 residues, 1–18 (MRKTFLTLLCVSSAIAHA), serve as a signal peptide directing secretion.

This sequence belongs to the fimbrial protein family.

Part of the yfcOPQRSUV fimbrial operon. Could contribute to adhesion to various surfaces in specific environmental niches. Increases adhesion to eukaryotic T24 bladder epithelial cells in the absence of fim genes. This is an uncharacterized protein from Escherichia coli (strain K12).